The primary structure comprises 229 residues: Somatolactin (229 aa).

Residues 1–21 (MAALQEVLLAVLLWPVLVTIS) form the signal peptide. Disulfide bonds link Cys-26–Cys-36, Cys-87–Cys-203, and Cys-220–Cys-228. Asn-143 carries an N-linked (GlcNAc...) asparagine glycan.

Belongs to the somatotropin/prolactin family. Pituitary gland.

Its subcellular location is the secreted. In Tetraodon miurus (Congo puffer), this protein is Somatolactin.